The primary structure comprises 445 residues: N-succinylarginine dihydrolase (445 aa).

Residues 19-28 (AGLSFGNVAS), Asn-110, and 137-138 (HR) each bind substrate. The active site involves Glu-174. Arg-214 provides a ligand contact to substrate. Residue His-250 is part of the active site. Substrate contacts are provided by Asp-252 and Asn-363. Cys-369 (nucleophile) is an active-site residue.

It belongs to the succinylarginine dihydrolase family. In terms of assembly, homodimer.

It carries out the reaction N(2)-succinyl-L-arginine + 2 H2O + 2 H(+) = N(2)-succinyl-L-ornithine + 2 NH4(+) + CO2. It functions in the pathway amino-acid degradation; L-arginine degradation via AST pathway; L-glutamate and succinate from L-arginine: step 2/5. In terms of biological role, catalyzes the hydrolysis of N(2)-succinylarginine into N(2)-succinylornithine, ammonia and CO(2). This is N-succinylarginine dihydrolase from Shewanella piezotolerans (strain WP3 / JCM 13877).